Consider the following 89-residue polypeptide: Small ribosomal subunit protein uS15 (89 aa).

It belongs to the universal ribosomal protein uS15 family. In terms of assembly, part of the 30S ribosomal subunit. Forms a bridge to the 50S subunit in the 70S ribosome, contacting the 23S rRNA.

One of the primary rRNA binding proteins, it binds directly to 16S rRNA where it helps nucleate assembly of the platform of the 30S subunit by binding and bridging several RNA helices of the 16S rRNA. Its function is as follows. Forms an intersubunit bridge (bridge B4) with the 23S rRNA of the 50S subunit in the ribosome. The protein is Small ribosomal subunit protein uS15 of Mannheimia succiniciproducens (strain KCTC 0769BP / MBEL55E).